The following is a 4650-amino-acid chain: Nonribosomal peptide synthetase lenA (4650 aa).

An adenylation 1 region spans residues 227 to 628 (GSILDTIRAK…DGSVIHVGRK (402 aa)). The Carrier 1 domain occupies 773–849 (PPETVLEKAL…KLAQYLRNTE (77 aa)). O-(pantetheine 4'-phosphoryl)serine is present on Ser-810. The condensation 1 stretch occupies residues 890–1212 (EDCYPCTALQ…CDFQSQLIFQ (323 aa)). The adenylation 2 stretch occupies residues 1288–1622 (ELELNAQKEP…RKIRPGYLGR (335 aa)). The Carrier 2 domain occupies 1745 to 1822 (PPVSAAEKKW…EIAALSETRD (78 aa)). Ser-1782 carries the O-(pantetheine 4'-phosphoryl)serine modification. The interval 1850-2110 (ATNLIAATVH…GEKTRPGGGA (261 aa)) is condensation 2. The adenylation 3 stretch occupies residues 2183 to 2511 (RCVHDLVHDA…RTGDLIKLRG (329 aa)). The Carrier 3 domain occupies 2630 to 2708 (APQNRLQHDI…EADVGLDHAS (79 aa)). Ser-2667 carries the post-translational modification O-(pantetheine 4'-phosphoryl)serine. The interval 2722-2998 (ESMARALAVI…KDARRRSPAN (277 aa)) is epimerase. The condensation 3 stretch occupies residues 3128 to 3565 (VQDVYPCTPI…VDDSQRQQIL (438 aa)). The interval 3578–3980 (CVHHIIHQRC…FVGRKDNQIK (403 aa)) is adenylation 4. The region spanning 4114–4190 (TPSTPLEAQL…QLAAVLEEGA (77 aa)) is the Carrier 4 domain. At Ser-4151 the chain carries O-(pantetheine 4'-phosphoryl)serine. A condensation 4 region spans residues 4249 to 4648 (HMVLTFSQPV…TTTPEKLVAE (400 aa)).

It belongs to the NRP synthetase family. Pantetheine 4'-phosphate is required as a cofactor.

It participates in alkaloid biosynthesis. Its function is as follows. Nonribosomal peptide synthetase; part of the gene cluster that mediates the biosynthesis of the ergot alkaloids lentopeptins A and B. Within the pathway, lenA catalyzes the biosynthesis of the Ala-Val-Ala peptide chain, including a cinnamic acid moiety as the starting unit. The release of the peptide from the enzyme is accomplished via a cyclization reaction catalyzed by the terminal condensation-like (Ct) domain of lenA to form the N-acyldiketopiperazine intermediate. The reaction appears to proceed through a nucleophilic attack on the carbonyl carbon by a lone electron pair of the valine amide nitrogen. The phenylalanine ammonia-lyase lenB provides the starter unit for the synthesis of the N-acyldiketopiperazine intermediate by the NRPS lenA, while the cytochrome P450 monooxygenase lenC is involved in the post-NRPS oxidative modification steps to form lentopeptins A and B. This chain is Nonribosomal peptide synthetase lenA, found in Aspergillus lentulus.